Reading from the N-terminus, the 1373-residue chain is DNA-directed RNA polymerase subunit beta (1373 aa).

It belongs to the RNA polymerase beta chain family. As to quaternary structure, the RNAP catalytic core consists of 2 alpha, 1 beta, 1 beta' and 1 omega subunit. When a sigma factor is associated with the core the holoenzyme is formed, which can initiate transcription.

The catalysed reaction is RNA(n) + a ribonucleoside 5'-triphosphate = RNA(n+1) + diphosphate. Its function is as follows. DNA-dependent RNA polymerase catalyzes the transcription of DNA into RNA using the four ribonucleoside triphosphates as substrates. In Rhodopseudomonas palustris (strain BisB18), this protein is DNA-directed RNA polymerase subunit beta.